A 736-amino-acid polypeptide reads, in one-letter code: Phosphoribosylformylglycinamidine synthase subunit PurL (736 aa).

Residue His-49 is part of the active site. The ATP site is built by Tyr-52 and Lys-91. A Mg(2+)-binding site is contributed by Glu-93. Residues 94–97 (SHNH) and Arg-116 contribute to the substrate site. Residue His-95 is the Proton acceptor of the active site. Asp-117 contributes to the Mg(2+) binding site. A substrate-binding site is contributed by Gln-240. Asp-268 provides a ligand contact to Mg(2+). 312–314 (ESQ) contacts substrate. ATP-binding residues include Asp-493 and Gly-530. Mg(2+) is bound at residue Asn-531. Ser-533 is a binding site for substrate.

The protein belongs to the FGAMS family. In terms of assembly, monomer. Part of the FGAM synthase complex composed of 1 PurL, 1 PurQ and 2 PurS subunits.

The protein localises to the cytoplasm. The catalysed reaction is N(2)-formyl-N(1)-(5-phospho-beta-D-ribosyl)glycinamide + L-glutamine + ATP + H2O = 2-formamido-N(1)-(5-O-phospho-beta-D-ribosyl)acetamidine + L-glutamate + ADP + phosphate + H(+). The protein operates within purine metabolism; IMP biosynthesis via de novo pathway; 5-amino-1-(5-phospho-D-ribosyl)imidazole from N(2)-formyl-N(1)-(5-phospho-D-ribosyl)glycinamide: step 1/2. Functionally, part of the phosphoribosylformylglycinamidine synthase complex involved in the purines biosynthetic pathway. Catalyzes the ATP-dependent conversion of formylglycinamide ribonucleotide (FGAR) and glutamine to yield formylglycinamidine ribonucleotide (FGAM) and glutamate. The FGAM synthase complex is composed of three subunits. PurQ produces an ammonia molecule by converting glutamine to glutamate. PurL transfers the ammonia molecule to FGAR to form FGAM in an ATP-dependent manner. PurS interacts with PurQ and PurL and is thought to assist in the transfer of the ammonia molecule from PurQ to PurL. The polypeptide is Phosphoribosylformylglycinamidine synthase subunit PurL (Rhodopseudomonas palustris (strain TIE-1)).